The following is a 761-amino-acid chain: 3'-5' RNA nuclease TATDN2 (761 aa).

6 disordered regions span residues 1-90, 135-181, 197-294, 318-337, 343-364, and 388-486; these read MASE…HFLG, CSLK…LRDQ, KSMP…RRTV, KDREVVMEHPSSGSDWSDVE, RFSQEEPVSLKPSAVPEPSSFT, and SSPK…PKSH. 2 stretches are compositionally biased toward low complexity: residues 33-52 and 66-85; these read APSSRPAQRSASRSGGPSSP and SRRLSWGSSRRRNNSSSSFS. Residues 247–294 are compositionally biased toward basic and acidic residues; sequence QKEKDATPEVSMEEDKTVPERSSFYDRRVVIDPQEKPSEEPLGDRRTV. Low complexity predominate over residues 388–402; that stretch reads SSPKPSSYPSTGSSS. Positions 417–431 are enriched in polar residues; the sequence is SDYSPNSTGSVQNTS. Basic and acidic residues predominate over residues 452–470; the sequence is RSSEEREVKEKRTFQEEMP. A divalent metal cation is bound by residues His-499, His-501, Glu-593, His-630, His-655, and Asp-707.

The protein belongs to the metallo-dependent hydrolases superfamily. TatD-type hydrolase family. Requires Mg(2+) as cofactor.

It is found in the nucleus. Its function is as follows. Mg(2+)-dependent 3'RNA exonuclease and endonuclease that resolves R-loops via specific degradation of R-loop RNA stucture. Shows no activity against D-loop and minimal activity against the RNA strand of an RNA-DNA hybrid duplex oligomer. Has no 3' or 5' exonuclease activity, no uracil glycosylase activity, and no 5' flap endonuclease activity on DNA substrates. May have a role in maintaining genomic stability through its role in R-loop resolution. In Homo sapiens (Human), this protein is 3'-5' RNA nuclease TATDN2 (TATDN2).